The chain runs to 320 residues: Chitinase 3 (320 aa).

Residues 1–18 (MRALALAVVAMAVVAVRG) form the signal peptide. The Chitin-binding type-1 domain maps to 19 to 59 (EQCGSQAGGALCPNCLCCSQYGWCGSTSDYCGAGCQSQCSG). Intrachain disulfides connect C21-C36, C30-C42, C33-C61, C35-C49, C53-C57, C97-C159, C172-C180, and C279-C311. E141 (proton donor) is an active-site residue.

It belongs to the glycosyl hydrolase 19 family. Chitinase class I subfamily. In terms of tissue distribution, expressed at low levels in roots, leaves, sheaths and meristems.

The enzyme catalyses Random endo-hydrolysis of N-acetyl-beta-D-glucosaminide (1-&gt;4)-beta-linkages in chitin and chitodextrins.. In terms of biological role, hydrolyzes chitin and plays a role in defense against fungal pathogens containing chitin. Inhibits the growth of T.reesei fungus on plate assay. The polypeptide is Chitinase 3 (Cht3) (Oryza sativa subsp. japonica (Rice)).